Consider the following 159-residue polypeptide: 2-C-methyl-D-erythritol 2,4-cyclodiphosphate synthase (159 aa).

A divalent metal cation is bound by residues Asp10 and His12. 4-CDP-2-C-methyl-D-erythritol 2-phosphate contacts are provided by residues 10-12 (DVH) and 36-37 (HS). His44 is an a divalent metal cation binding site. 4-CDP-2-C-methyl-D-erythritol 2-phosphate contacts are provided by residues 58 to 60 (DIG), 63 to 67 (FPDTD), 102 to 108 (AQAPKMA), 134 to 137 (TTTE), Phe141, and Arg144.

It belongs to the IspF family. In terms of assembly, homotrimer. The cofactor is a divalent metal cation.

The enzyme catalyses 4-CDP-2-C-methyl-D-erythritol 2-phosphate = 2-C-methyl-D-erythritol 2,4-cyclic diphosphate + CMP. It participates in isoprenoid biosynthesis; isopentenyl diphosphate biosynthesis via DXP pathway; isopentenyl diphosphate from 1-deoxy-D-xylulose 5-phosphate: step 4/6. In terms of biological role, involved in the biosynthesis of isopentenyl diphosphate (IPP) and dimethylallyl diphosphate (DMAPP), two major building blocks of isoprenoid compounds. Catalyzes the conversion of 4-diphosphocytidyl-2-C-methyl-D-erythritol 2-phosphate (CDP-ME2P) to 2-C-methyl-D-erythritol 2,4-cyclodiphosphate (ME-CPP) with a corresponding release of cytidine 5-monophosphate (CMP). The polypeptide is 2-C-methyl-D-erythritol 2,4-cyclodiphosphate synthase (Shewanella piezotolerans (strain WP3 / JCM 13877)).